A 492-amino-acid chain; its full sequence is G protein-activated inward rectifier potassium channel 1 (492 aa).

At 1 to 72 (MSALRRKLGD…LFTTLVDLKW (72 aa)) the chain is on the cytoplasmic side. The interval 16–35 (STSASGGGLPPPRAAPRGKR) is disordered. The chain crosses the membrane as a helical span at residues 73-97 (RWNLFIFVLTYTVAWLFMASMWWVI). Over 98-121 (AYMRGDLNKAHDDSYTPCVANVYN) the chain is Extracellular. The helical; Pore-forming intramembrane region spans 122 to 133 (FPSAFLFFIETE). Residues 134–140 (ATIGYGY) constitute an intramembrane region (pore-forming). A Selectivity filter motif is present at residues 135-140 (TIGYGY). Over 141–149 (RYITDKCPE) the chain is Extracellular. The helical transmembrane segment at 150-171 (GIILFLFQSILGSIVDAFLIGC) threads the bilayer. Residues 172 to 492 (MFIKMSQPKK…LRKMNSDRFT (321 aa)) are Cytoplasmic-facing. The polyphosphoinositide (PIP2)-binding stretch occupies residues 174–201 (IKMSQPKKRAETLMFSEHAAISMRDGKL). Residues 452–492 (SDPMSQSVADLPPKLQKLSGGGRMEGNLPPKLRKMNSDRFT) form a disordered region.

The protein belongs to the inward rectifier-type potassium channel (TC 1.A.2.1) family. KCNJ3 subfamily. As to quaternary structure, associates with KCNJ5/GIRK4 or KCNJ6/GIRK2 or KCNJ9/GIRK3 to form a G-protein activated heteromultimer pore-forming unit. The resulting inward current is much larger.

Its subcellular location is the membrane. The enzyme catalyses K(+)(in) = K(+)(out). With respect to regulation, heteromultimer composed of KCNJ3/GIRK1 and KCNJ5/GIRK4 is activated by phosphatidylinositol 4,5 biphosphate (PtdIns(4,5)P2). In terms of biological role, inward rectifier potassium channels are characterized by a greater tendency to allow potassium to flow into the cell rather than out of it. Their voltage dependence is regulated by the concentration of extracellular potassium; as external potassium is raised, the voltage range of the channel opening shifts to more positive voltages. The inward rectification is mainly due to the blockage of outward current by internal magnesium. This potassium channel is controlled by G proteins. This receptor plays a crucial role in regulating the heartbeat. The polypeptide is G protein-activated inward rectifier potassium channel 1 (KCNJ3) (Gallus gallus (Chicken)).